We begin with the raw amino-acid sequence, 344 residues long: L-threonine 3-dehydrogenase (344 aa).

Cys42 is a binding site for Zn(2+). Residues Thr44 and His47 each act as charge relay system in the active site. Residues His67, Glu68, Cys97, Cys100, Cys103, and Cys111 each coordinate Zn(2+). NAD(+)-binding positions include Ile179, Asp199, Arg204, 266–268 (LGI), and 290–291 (IY).

This sequence belongs to the zinc-containing alcohol dehydrogenase family. Homotetramer. Requires Zn(2+) as cofactor.

Its subcellular location is the cytoplasm. The enzyme catalyses L-threonine + NAD(+) = (2S)-2-amino-3-oxobutanoate + NADH + H(+). The protein operates within amino-acid degradation; L-threonine degradation via oxydo-reductase pathway; glycine from L-threonine: step 1/2. Catalyzes the NAD(+)-dependent oxidation of L-threonine to 2-amino-3-ketobutyrate. The chain is L-threonine 3-dehydrogenase from Sinorhizobium medicae (strain WSM419) (Ensifer medicae).